The chain runs to 553 residues: Coiled-coil domain-containing protein 85A (553 aa).

Over residues 1–28 the composition is skewed to low complexity; sequence MSKAAGGAAAAAAAAESCSPAPAGSSAA. The segment at 1-37 is disordered; that stretch reads MSKAAGGAAAAAAAAESCSPAPAGSSAAPPAPVEDLS. 2 coiled-coil regions span residues 43–109 and 137–169; these read ELLQ…RDLC and MHKEVALYLQKLKDLEVKQEEVVKENMELKELC. 3 disordered regions span residues 203–414, 433–461, and 491–518; these read YVRD…GMNE, ENRMLPQASQNRRQPPTRNSSNMEKGWGS, and SGADGSNSSPNSAASFSGHATPSQQPEP. Over residues 209–220 the composition is skewed to low complexity; the sequence is DGSSTSSTGSTD. Over residues 236–260 the composition is skewed to basic and acidic residues; the sequence is HLQKPRSEGSPEHSKHRSASPEHPQ. Residues 376–389 show a composition bias toward gly residues; it reads GGSGGSGGSGGGSR. Residues 391 to 403 are compositionally biased toward basic and acidic residues; it reads GTLRRQAQEDGSP. A coiled-coil region spans residues 412–443; it reads MNESTLSYVRQLEARVRQLEEENRMLPQASQN. Residues 439–455 show a composition bias toward polar residues; the sequence is QASQNRRQPPTRNSSNM. A compositionally biased stretch (low complexity) spans 491–508; it reads SGADGSNSSPNSAASFSG. Arg541 carries the post-translational modification Asymmetric dimethylarginine.

This sequence belongs to the CCDC85 family. As to quaternary structure, may interact with ARVCF; CTNND1; CTNND2 and PKP4.

Its subcellular location is the cell junction. The protein localises to the adherens junction. Its function is as follows. May play a role in cell-cell adhesion and epithelium development through its interaction with proteins of the beta-catenin family. This is Coiled-coil domain-containing protein 85A (CCDC85A) from Homo sapiens (Human).